Consider the following 157-residue polypeptide: 2-C-methyl-D-erythritol 2,4-cyclodiphosphate synthase (157 aa).

Asp8 and His10 together coordinate a divalent metal cation. 4-CDP-2-C-methyl-D-erythritol 2-phosphate-binding positions include 8 to 10 and 34 to 35; these read DVH and HS. His42 contacts a divalent metal cation. 4-CDP-2-C-methyl-D-erythritol 2-phosphate-binding positions include 56–58, 61–65, 100–106, 132–135, Phe139, and Arg142; these read DIG, FPDTD, AQAPKMA, and TTTE.

This sequence belongs to the IspF family. Homotrimer. It depends on a divalent metal cation as a cofactor.

The enzyme catalyses 4-CDP-2-C-methyl-D-erythritol 2-phosphate = 2-C-methyl-D-erythritol 2,4-cyclic diphosphate + CMP. Its pathway is isoprenoid biosynthesis; isopentenyl diphosphate biosynthesis via DXP pathway; isopentenyl diphosphate from 1-deoxy-D-xylulose 5-phosphate: step 4/6. Functionally, involved in the biosynthesis of isopentenyl diphosphate (IPP) and dimethylallyl diphosphate (DMAPP), two major building blocks of isoprenoid compounds. Catalyzes the conversion of 4-diphosphocytidyl-2-C-methyl-D-erythritol 2-phosphate (CDP-ME2P) to 2-C-methyl-D-erythritol 2,4-cyclodiphosphate (ME-CPP) with a corresponding release of cytidine 5-monophosphate (CMP). The polypeptide is 2-C-methyl-D-erythritol 2,4-cyclodiphosphate synthase (Serratia proteamaculans (strain 568)).